The following is a 413-amino-acid chain: DnaJ protein homolog (413 aa).

Residues 10-75 form the J domain; that stretch reads NTKYYEILGV…REIYDQYGED (66 aa). The CR-type zinc-finger motif lies at 133–217; the sequence is GTSKKLSLSR…CKGEKVVQEK (85 aa). CXXCXGXG motif repeat units lie at residues 146–153, 162–169, 189–196, and 205–212; these read CSKCKGKG, CPGCQGSG, CNECKGTG, and CSQCKGEK. The segment at 387–413 is disordered; that stretch reads RRKQAQEAYDEDEDMHGGAQRVQCAQQ. The residue at position 410 (Cys410) is a Cysteine methyl ester. The S-farnesyl cysteine moiety is linked to residue Cys410. Residues 411–413 constitute a propeptide, removed in mature form; it reads AQQ.

In terms of tissue distribution, expressed in seedlings in all tissues, but exceedingly high levels in hypocotyledons and roots.

Its subcellular location is the cell membrane. In terms of biological role, plays a continuous role in plant development probably in the structural organization of compartments. The sequence is that of DnaJ protein homolog (DNAJ1) from Cucumis sativus (Cucumber).